The sequence spans 775 residues: Lon protease (775 aa).

Residues 6–207 (LPLMALRDIV…TIINILTSNI (202 aa)) enclose the Lon N-terminal domain. An ATP-binding site is contributed by 356-363 (GPPGVGKT). A Lon proteolytic domain is found at 592 to 773 (NDQIGSTTGL…DQVLEHALTK (182 aa)). Residues serine 679 and lysine 722 contribute to the active site.

This sequence belongs to the peptidase S16 family. In terms of assembly, homohexamer. Organized in a ring with a central cavity.

Its subcellular location is the cytoplasm. It catalyses the reaction Hydrolysis of proteins in presence of ATP.. Functionally, ATP-dependent serine protease that mediates the selective degradation of mutant and abnormal proteins as well as certain short-lived regulatory proteins. Required for cellular homeostasis and for survival from DNA damage and developmental changes induced by stress. Degrades polypeptides processively to yield small peptide fragments that are 5 to 10 amino acids long. Binds to DNA in a double-stranded, site-specific manner. The chain is Lon protease from Rickettsia bellii (strain RML369-C).